A 510-amino-acid chain; its full sequence is Probable cytosol aminopeptidase (510 aa).

Mn(2+) is bound by residues K282 and D287. K294 is an active-site residue. Mn(2+) is bound by residues D305, D364, and E366. R368 is an active-site residue.

This sequence belongs to the peptidase M17 family. Mn(2+) serves as cofactor.

It localises to the cytoplasm. It catalyses the reaction Release of an N-terminal amino acid, Xaa-|-Yaa-, in which Xaa is preferably Leu, but may be other amino acids including Pro although not Arg or Lys, and Yaa may be Pro. Amino acid amides and methyl esters are also readily hydrolyzed, but rates on arylamides are exceedingly low.. The enzyme catalyses Release of an N-terminal amino acid, preferentially leucine, but not glutamic or aspartic acids.. In terms of biological role, presumably involved in the processing and regular turnover of intracellular proteins. Catalyzes the removal of unsubstituted N-terminal amino acids from various peptides. In Cupriavidus pinatubonensis (strain JMP 134 / LMG 1197) (Cupriavidus necator (strain JMP 134)), this protein is Probable cytosol aminopeptidase.